Here is a 91-residue protein sequence, read N- to C-terminus: Uteroglobin (91 aa).

Positions 1–21 are cleaved as a signal peptide; that stretch reads MKLAITLALVTLALLCSPASA.

Belongs to the secretoglobin family. In terms of assembly, antiparallel homodimer; disulfide-linked. Interaction with LMBR1L is controversial. In terms of tissue distribution, synthesized in the uterus and lung.

The protein resides in the secreted. Its function is as follows. Uteroglobin binds progesterone specifically and with high affinity. It may regulate progesterone concentrations reaching the blastocyst. It is also a potent inhibitor of phospholipase A2. This chain is Uteroglobin (SCGB1A1), found in Oryctolagus cuniculus (Rabbit).